The chain runs to 630 residues: Chaperone protein HtpG (630 aa).

An a; substrate-binding region spans residues 1-327 (MSVETYKFDA…SEDLSLNISR (327 aa)). Positions 328–551 (ETLQHSPLID…EGSMDIRTER (224 aa)) are b. Positions 483–499 (TKTAKSSDTNNDGKDDT) are enriched in basic and acidic residues. The segment at 483-504 (TKTAKSSDTNNDGKDDTSSSDD) is disordered. The segment at 552–630 (FLIEQKQLSS…INFFIEKSVN (79 aa)) is c.

It belongs to the heat shock protein 90 family. As to quaternary structure, homodimer.

The protein localises to the cytoplasm. In terms of biological role, molecular chaperone. Has ATPase activity. The chain is Chaperone protein HtpG from Orientia tsutsugamushi (strain Boryong) (Rickettsia tsutsugamushi).